The sequence spans 263 residues: GTP cyclohydrolase FolE2 (263 aa).

The protein belongs to the GTP cyclohydrolase IV family.

The enzyme catalyses GTP + H2O = 7,8-dihydroneopterin 3'-triphosphate + formate + H(+). The protein operates within cofactor biosynthesis; 7,8-dihydroneopterin triphosphate biosynthesis; 7,8-dihydroneopterin triphosphate from GTP: step 1/1. Converts GTP to 7,8-dihydroneopterin triphosphate. In Nitrosospira multiformis (strain ATCC 25196 / NCIMB 11849 / C 71), this protein is GTP cyclohydrolase FolE2.